The primary structure comprises 240 residues: Diglucosylglycerate octanoyltransferase (240 aa).

It belongs to the OctT acyltransferase family. In terms of assembly, homotetramer.

It catalyses the reaction (2R)-2-O-[alpha-D-glucopyranosyl-(1-&gt;6)-alpha-D-glucopyranosyl]-glycerate + octanoyl-CoA = (2R)-2-O-[6-O-octanoyl-alpha-D-glucopyranosyl-(1-&gt;6)-alpha-D-glucopyranosyl]-glycerate + CoA. Its function is as follows. Sugar octanoyltransferase likely involved in the biosynthesis of mycobacterial methylglucose lipopolysaccharide (MGLP). Catalyzes the transfer of an octanoyl group from octanoyl-CoA to the C6 OH of the second glucose in diglucosylglycerate (DGG). Can also use hexanoyl-CoA as acyl donor in vitro. DGG is the preferred acceptor, but to a lesser extent, GG (glucosylglycerate) can be used as substrate. DGG and GG are the two earliest intermediates in MGLP biosynthesis. The polypeptide is Diglucosylglycerate octanoyltransferase (Mycolicibacterium hassiacum (strain DSM 44199 / CIP 105218 / JCM 12690 / 3849) (Mycobacterium hassiacum)).